We begin with the raw amino-acid sequence, 987 residues long: ATP-dependent 6-phosphofructokinase subunit alpha (987 aa).

The segment at 1 to 602 is N-terminal catalytic PFK domain 1; the sequence is MPSSSDAINR…DYRYFRDISI (602 aa). Residues glycine 237, 300–301, and 330–333 each bind ATP; these read RC and GDGS. Residue aspartate 331 participates in Mg(2+) binding. Beta-D-fructose 6-phosphate contacts are provided by residues 376 to 378, arginine 413, 420 to 422, glutamate 477, arginine 504, and 510 to 513; these read SID, MGR, and HVQR. The active-site Proton acceptor is the aspartate 378. The tract at residues 603-616 is interdomain linker; that stretch reads YDDGSKQLSEDKRL. Residues 617-987 form a C-terminal regulatory PFK domain 2 region; the sequence is NIAIVHVGAA…KSLLKKQERY (371 aa). Residues arginine 686, 743-747, arginine 781, 788-790, glutamate 848, arginine 874, 880-883, and arginine 958 contribute to the beta-D-fructose 2,6-bisphosphate site; these read TVSNN, QGG, and HVQQ.

Belongs to the phosphofructokinase type A (PFKA) family. ATP-dependent PFK group I subfamily. Eukaryotic two domain clade 'E' sub-subfamily. Heterooctamer of 4 alpha and 4 beta chains. Requires Mg(2+) as cofactor.

The protein localises to the cytoplasm. It catalyses the reaction beta-D-fructose 6-phosphate + ATP = beta-D-fructose 1,6-bisphosphate + ADP + H(+). The protein operates within carbohydrate degradation; glycolysis; D-glyceraldehyde 3-phosphate and glycerone phosphate from D-glucose: step 3/4. Its activity is regulated as follows. Allosterically activated by ADP, AMP, or fructose 2,6-bisphosphate, and allosterically inhibited by ATP or citrate. Functionally, catalyzes the phosphorylation of D-fructose 6-phosphate to fructose 1,6-bisphosphate by ATP, the first committing step of glycolysis. The chain is ATP-dependent 6-phosphofructokinase subunit alpha (PFK1) from Candida albicans (Yeast).